Reading from the N-terminus, the 3432-residue chain is Genome polyprotein (3432 aa).

The interval threonine 2–asparagine 15 is interaction with host EXOC1. The Cytoplasmic portion of the chain corresponds to threonine 2 to glutamate 109. A hydrophobic; homodimerization of capsid protein C region spans residues leucine 37–valine 72. A propeptide spans glycine 106–alanine 127 (ER anchor for the capsid protein C, removed in mature form by serine protease NS3). A helical transmembrane segment spans residues glycine 110–leucine 130. Residues serine 131 to asparagine 253 lie on the Extracellular side of the membrane. Asparagine 142 is a glycosylation site (N-linked (GlcNAc...) asparagine; by host). A helical membrane pass occupies residues tryptophan 254–serine 274. Residues asparagine 275–arginine 279 lie on the Cytoplasmic side of the membrane. A helical membrane pass occupies residues valine 280–serine 294. Residues phenylalanine 295–leucine 746 lie on the Extracellular side of the membrane. 6 cysteine pairs are disulfide-bonded: cysteine 297–cysteine 324, cysteine 354–cysteine 410, cysteine 354–cysteine 415, cysteine 368–cysteine 399, cysteine 386–cysteine 410, and cysteine 386–cysteine 415. Positions aspartate 392–glycine 405 are fusion peptide. The N-linked (GlcNAc...) asparagine; by host glycan is linked to asparagine 448. Disulfide bonds link cysteine 484–cysteine 581 and cysteine 598–cysteine 629. Residues phenylalanine 747–valine 767 form a helical membrane-spanning segment. Residues asparagine 768 to serine 773 are Cytoplasmic-facing. Residues isoleucine 774 to alanine 794 traverse the membrane as a helical segment. The Extracellular segment spans residues aspartate 795–aspartate 1219. 6 disulfides stabilise this stretch: cysteine 798–cysteine 809, cysteine 849–cysteine 937, cysteine 973–cysteine 1017, cysteine 1074–cysteine 1123, cysteine 1085–cysteine 1106, and cysteine 1107–cysteine 1110. Residues asparagine 924 and asparagine 1001 are each glycosylated (N-linked (GlcNAc...) asparagine; by host). The chain crosses the membrane as a helical span at residues valine 1220–methionine 1240. Topologically, residues leucine 1241–asparagine 1250 are cytoplasmic. The chain crosses the membrane as a helical span at residues valine 1251–valine 1271. Histidine 1272 is a topological domain (lumenal). A helical transmembrane segment spans residues glycine 1273–threonine 1293. At serine 1294–arginine 1309 the chain is on the cytoplasmic side. A helical membrane pass occupies residues alanine 1310–histidine 1330. Residues glutamate 1331 to glycine 1341 lie on the Lumenal side of the membrane. A helical membrane pass occupies residues alanine 1342–alanine 1362. The Cytoplasmic segment spans residues glycine 1363–glycine 1374. Interaction with human SPCS1 regions lie at residues glycine 1374 to threonine 1423 and phenylalanine 1458 to glycine 1505. The chain crosses the membrane as a helical span at residues tryptophan 1375–alanine 1395. Residues glutamate 1396–aspartate 1398 lie on the Lumenal side of the membrane. Residues isoleucine 1399–serine 1419 traverse the membrane as a helical segment. The Cytoplasmic segment spans residues glycine 1420–serine 1476. The interacts with and activates NS3 protease stretch occupies residues leucine 1427–valine 1466. Residues cysteine 1477–leucine 1497 constitute an intramembrane region (helical). Residues threonine 1498–alanine 2173 lie on the Cytoplasmic side of the membrane. Positions glycine 1505 to alanine 1682 constitute a Peptidase S7 domain. Active-site charge relay system; for serine protease NS3 activity residues include histidine 1555, aspartate 1579, and serine 1639. In terms of domain architecture, Helicase ATP-binding spans proline 1685–glutamine 1841. An important for RNA-binding region spans residues arginine 1689–glutamine 1692. Leucine 1698–threonine 1705 contributes to the ATP binding site. The short motif at aspartate 1789–histidine 1792 is the DEAH box element. Positions glycine 1852–glutamate 2017 constitute a Helicase C-terminal domain. At lysine 1893 the chain carries N6-acetyllysine; by host. Positions asparagine 1950–glutamine 1972 are disordered. A regulates the ATPase activity of NS3 helicase region spans residues glutamate 2168–aspartate 2172. A helical membrane pass occupies residues leucine 2174 to methionine 2194. Over methionine 2195 to glycine 2199 the chain is Lumenal. Positions isoleucine 2200 to alanine 2220 form an intramembrane region, helical. Position 2221 (glutamate 2221) is a topological domain, lumenal. A helical transmembrane segment spans residues valine 2222–isoleucine 2242. Residues proline 2243–alanine 2257 lie on the Cytoplasmic side of the membrane. The chain crosses the membrane as a helical span at residues valine 2258 to leucine 2278. The Lumenal segment spans residues glutamate 2279–alanine 2311. The segment at residues threonine 2312 to isoleucine 2332 is an intramembrane region (helical). Topologically, residues threonine 2333–glycine 2368 are lumenal. Residues leucine 2369 to leucine 2389 form a helical membrane-spanning segment. The Cytoplasmic portion of the chain corresponds to alanine 2390–lysine 2444. The helical transmembrane segment at valine 2445 to threonine 2465 threads the bilayer. The Lumenal portion of the chain corresponds to threonine 2466–glutamate 2469. A helical membrane pass occupies residues alanine 2470–tryptophan 2490. At asparagine 2491–isoleucine 3432 the chain is on the cytoplasmic side. One can recognise an mRNA cap 0-1 NS5-type MT domain in the interval glycine 2528 to alanine 2793. Serine 2583 contributes to the S-adenosyl-L-methionine binding site. Serine 2583 carries the phosphoserine modification. The For 2'-O-MTase activity role is filled by lysine 2588. 6 residues coordinate S-adenosyl-L-methionine: glycine 2613, tryptophan 2614, threonine 2631, lysine 2632, aspartate 2658, and valine 2659. The active-site For 2'-O-MTase activity is the aspartate 2673. Residue isoleucine 2674 coordinates S-adenosyl-L-methionine. Residues lysine 2709 and glutamate 2745 each act as for 2'-O-MTase activity in the active site. Tyrosine 2747 contacts S-adenosyl-L-methionine. Positions 2967, 2971, 2976, and 2979 each coordinate Zn(2+). In terms of domain architecture, RdRp catalytic spans glycine 3057–alanine 3209. Zn(2+)-binding residues include histidine 3244, cysteine 3260, and cysteine 3379.

It in the N-terminal section; belongs to the class I-like SAM-binding methyltransferase superfamily. mRNA cap 0-1 NS5-type methyltransferase family. Homodimer. Interacts (via N-terminus) with host EXOC1 (via C-terminus); this interaction results in EXOC1 degradation through the proteasome degradation pathway. As to quaternary structure, forms heterodimers with envelope protein E in the endoplasmic reticulum and Golgi. In terms of assembly, homodimer; in the endoplasmic reticulum and Golgi. Interacts with protein prM. Interacts with non-structural protein 1. Interacts with host HSPA5. Homodimer; Homohexamer when secreted. Interacts with envelope protein E. NS1 interacts with NS4B. Interacts with host complement protein CFH; this interaction leads to the degradation of C3. As to quaternary structure, interacts (via N-terminus) with serine protease NS3. In terms of assembly, forms a heterodimer with serine protease NS3. May form homooligomers. Interacts with human SPCS1. Forms a heterodimer with NS2B. Interacts with non-structural protein 2A (via N-terminus). Interacts with NS4B. Interacts with unphosphorylated RNA-directed RNA polymerase NS5; this interaction stimulates RNA-directed RNA polymerase NS5 guanylyltransferase activity. Interacts with host ILF2. As to quaternary structure, interacts with serine protease NS3. In terms of assembly, homodimer. Interacts with host STAT2; this interaction inhibits the phosphorylation of the latter, and, when all viral proteins are present (polyprotein), targets STAT2 for degradation. Interacts with serine protease NS3. It depends on Mn(2+) as a cofactor. Mg(2+) serves as cofactor. Post-translationally, specific enzymatic cleavages in vivo yield mature proteins. Cleavages in the lumen of endoplasmic reticulum are performed by host signal peptidase, whereas cleavages in the cytoplasmic side are performed by serine protease NS3. Signal cleavage at the 2K-4B site requires a prior NS3 protease-mediated cleavage at the 4A-2K site. Cleaved in post-Golgi vesicles by a host furin, releasing the mature small envelope protein M, and peptide pr. This cleavage is incomplete as up to 30% of viral particles still carry uncleaved prM. In terms of processing, N-glycosylated. Post-translationally, N-glycosylated. The excreted form is glycosylated and this is required for efficient secretion of the protein from infected cells. Acetylated by host KAT5. Acetylation modulates NS3 RNA-binding and unwinding activities and plays an important positive role for viral replication. In terms of processing, phosphorylated on serines residues. This phosphorylation may trigger NS5 nuclear localization.

It is found in the host endoplasmic reticulum membrane. It localises to the virion. Its subcellular location is the host nucleus. The protein localises to the host cytoplasm. The protein resides in the host perinuclear region. It is found in the secreted. It localises to the virion membrane. Its subcellular location is the host cell surface. It carries out the reaction Selective hydrolysis of -Xaa-Xaa-|-Yaa- bonds in which each of the Xaa can be either Arg or Lys and Yaa can be either Ser or Ala.. It catalyses the reaction RNA(n) + a ribonucleoside 5'-triphosphate = RNA(n+1) + diphosphate. The enzyme catalyses a ribonucleoside 5'-triphosphate + H2O = a ribonucleoside 5'-diphosphate + phosphate + H(+). The catalysed reaction is ATP + H2O = ADP + phosphate + H(+). It carries out the reaction a 5'-end (5'-triphosphoguanosine)-ribonucleoside in mRNA + S-adenosyl-L-methionine = a 5'-end (N(7)-methyl 5'-triphosphoguanosine)-ribonucleoside in mRNA + S-adenosyl-L-homocysteine. It catalyses the reaction a 5'-end (N(7)-methyl 5'-triphosphoguanosine)-ribonucleoside in mRNA + S-adenosyl-L-methionine = a 5'-end (N(7)-methyl 5'-triphosphoguanosine)-(2'-O-methyl-ribonucleoside) in mRNA + S-adenosyl-L-homocysteine + H(+). Functionally, plays a role in virus budding by binding to the cell membrane and gathering the viral RNA into a nucleocapsid that forms the core of a mature virus particle. During virus entry, may induce genome penetration into the host cytoplasm after hemifusion induced by the surface proteins. Can migrate to the cell nucleus where it modulates host functions. Overcomes the anti-viral effects of host EXOC1 by sequestering and degrading the latter through the proteasome degradation pathway. In terms of biological role, inhibits RNA silencing by interfering with host Dicer. Its function is as follows. Prevents premature fusion activity of envelope proteins in trans-Golgi by binding to envelope protein E at pH 6.0. After virion release in extracellular space, gets dissociated from E dimers. Acts as a chaperone for envelope protein E during intracellular virion assembly by masking and inactivating envelope protein E fusion peptide. prM is the only viral peptide matured by host furin in the trans-Golgi network probably to avoid catastrophic activation of the viral fusion activity in acidic Golgi compartment prior to virion release. prM-E cleavage is inefficient, and many virions are only partially matured. These uncleaved prM would play a role in immune evasion. Functionally, may play a role in virus budding. Exerts cytotoxic effects by activating a mitochondrial apoptotic pathway through M ectodomain. May display a viroporin activity. In terms of biological role, binds to host cell surface receptor and mediates fusion between viral and cellular membranes. Efficient virus attachment to cell is, at least in part, mediated by host HSPA5. Envelope protein is synthesized in the endoplasmic reticulum in the form of heterodimer with protein prM. They play a role in virion budding in the ER, and the newly formed immature particle is covered with 60 spikes composed of heterodimer between precursor prM and envelope protein E. The virion is transported to the Golgi apparatus where the low pH causes dissociation of PrM-E heterodimers and formation of E homodimers. prM-E cleavage is inefficient, and many virions are only partially matured. These uncleaved prM would play a role in immune evasion. Its function is as follows. Involved in immune evasion, pathogenesis and viral replication. Once cleaved off the polyprotein, is targeted to three destinations: the viral replication cycle, the plasma membrane and the extracellular compartment. Essential for viral replication. Required for formation of the replication complex and recruitment of other non-structural proteins to the ER-derived membrane structures. Excreted as a hexameric lipoparticle that plays a role against host immune response. Antagonizing the complement function. Binds to the host macrophages and dendritic cells. Inhibits signal transduction originating from Toll-like receptor 3 (TLR3). Component of the viral RNA replication complex that functions in virion assembly and antagonizes the host alpha/beta interferon antiviral response. Functionally, required cofactor for the serine protease function of NS3. May have membrane-destabilizing activity and form viroporins. In terms of biological role, displays three enzymatic activities: serine protease, NTPase and RNA helicase. NS3 serine protease, in association with NS2B, performs its autocleavage and cleaves the polyprotein at dibasic sites in the cytoplasm: C-prM, NS2A-NS2B, NS2B-NS3, NS3-NS4A, NS4A-2K and NS4B-NS5. NS3 RNA helicase binds RNA and unwinds dsRNA in the 3' to 5' direction. Its function is as follows. Regulates the ATPase activity of the NS3 helicase activity. NS4A allows NS3 helicase to conserve energy during unwinding. Functions as a signal peptide for NS4B and is required for the interferon antagonism activity of the latter. Functionally, induces the formation of ER-derived membrane vesicles where the viral replication takes place. Inhibits interferon (IFN)-induced host STAT1 phosphorylation and nuclear translocation, thereby preventing the establishment of cellular antiviral state by blocking the IFN-alpha/beta pathway. Inhibits STAT2 translocation in the nucleus after IFN-alpha treatment. In terms of biological role, replicates the viral (+) and (-) RNA genome. Performs the capping of genomes in the cytoplasm. NS5 methylates viral RNA cap at guanine N-7 and ribose 2'-O positions. Besides its role in RNA genome replication, also prevents the establishment of cellular antiviral state by blocking the interferon-alpha/beta (IFN-alpha/beta) signaling pathway. Inhibits host TYK2 and STAT2 phosphorylation, thereby preventing activation of JAK-STAT signaling pathway. The chain is Genome polyprotein from Japanese encephalitis virus (strain SA-14) (JEV).